The chain runs to 157 residues: MQLTVKALQGRECSLQVPEDELVSTLKQLVSEKLNVPVRQQRLLFKGKALADGKRLSDYSIGPNSKLNLVVKPLEKVLLEEGEAQRLADSPPPQVWQLISKVLARHFSAADASRVLEQPQRDYERSLSRLTLDDIERLASRFLHPEVTETMEKGFSK.

The Ubiquitin-like domain occupies 1–76; that stretch reads MQLTVKALQG…LNLVVKPLEK (76 aa). A Glycyl lysine isopeptide (Lys-Gly) (interchain with G-Cter in ubiquitin) cross-link involves residue lysine 48. Serine 90 is modified (phosphoserine). The required and sufficient for interaction with BAG6 stretch occupies residues 96-138; sequence WQLISKVLARHFSAADASRVLEQPQRDYERSLSRLTLDDIERL.

Component of the BAG6/BAT3 complex, at least composed of BAG6, UBL4A and GET4/TRC35. Interacts with BAG6; the interaction is direct and required for UBL4A protein stability. Interacts with USP13; may be indirect via BAG6. Post-translationally, polyubiquitinated. Ubiquitination by AMFR and deubiquitination by USP13 may regulate the interaction between the BAG6/BAT complex and SGTA and therefore may regulate client proteins fate.

The protein resides in the cytoplasm. The protein localises to the cytosol. Its subcellular location is the nucleus. As part of a cytosolic protein quality control complex, the BAG6/BAT3 complex, maintains misfolded and hydrophobic patches-containing proteins in a soluble state and participates in their proper delivery to the endoplasmic reticulum or alternatively can promote their sorting to the proteasome where they undergo degradation. The BAG6/BAT3 complex is involved in the post-translational delivery of tail-anchored/type II transmembrane proteins to the endoplasmic reticulum membrane. Recruited to ribosomes, it interacts with the transmembrane region of newly synthesized tail-anchored proteins and together with SGTA and ASNA1 mediates their delivery to the endoplasmic reticulum. Client proteins that cannot be properly delivered to the endoplasmic reticulum are ubiquitinated and sorted to the proteasome. Similarly, the BAG6/BAT3 complex also functions as a sorting platform for proteins of the secretory pathway that are mislocalized to the cytosol either delivering them to the proteasome for degradation or to the endoplasmic reticulum. The BAG6/BAT3 complex also plays a role in the endoplasmic reticulum-associated degradation (ERAD), a quality control mechanism that eliminates unwanted proteins of the endoplasmic reticulum through their retrotranslocation to the cytosol and their targeting to the proteasome. It maintains these retrotranslocated proteins in an unfolded yet soluble state condition in the cytosol to ensure their proper delivery to the proteasome. The protein is Ubiquitin-like protein 4A (UBL4A) of Pongo abelii (Sumatran orangutan).